We begin with the raw amino-acid sequence, 161 residues long: MKKIGLLFMLCLAALFTIGFPAQQADAAEAPYKASITNISTDGGVYGKINYGQGQYWRVKYNITVSGKLLDQNGQPVPNAPVRFEADTKVGNTTQTASGTTDANGTFEVPMYLGPAAGYYTYYTSVSVHYYDIIPFRVFSGESRLVSTDNSLYHFAYQVRR.

A signal peptide spans 1-27 (MKKIGLLFMLCLAALFTIGFPAQQADA).

Its subcellular location is the secreted. This is an uncharacterized protein from Bacillus subtilis (strain 168).